The sequence spans 20 residues: Pregnancy-associated glycoprotein 71D (20 aa).

The N-linked (GlcNAc...) asparagine glycan is linked to N4.

It belongs to the peptidase A1 family. Chorionic epithelium (trophectoderm) and placental cotyledons.

The protein localises to the secreted. Its subcellular location is the extracellular space. This Bison bonasus (European bison) protein is Pregnancy-associated glycoprotein 71D.